A 278-amino-acid polypeptide reads, in one-letter code: RsbT co-antagonist protein RsbRD (278 aa).

The region spanning 160 to 271 is the STAS domain; that stretch reads SAPIMPITDG…QSLAKALANK (112 aa). The residue at position 181 (threonine 181) is a Phosphothreonine.

Probably present in the stressosome with RsbRA, RsbRB, RsbRC and RsbS. Post-translationally, phosphorylated by RsbT.

Functionally, one of 4 functionally non-identical RsbR paralogs, it functions in the environmental signaling branch of the general stress response. Negative regulator of sigma-B activity. Non-phosphorylated RsbS binds to RsbT, preventing its association with RsbU. Requires any one of RsbRA, RsbRB, RsbRC or RsbRD to sequester RsbT. When RsbS and the RsbR paralog(s) are phosphorylated, they release RsbT, which can then bind and activate RsbU. The sequence is that of RsbT co-antagonist protein RsbRD (rsbRD) from Bacillus subtilis (strain 168).